The primary structure comprises 419 residues: Gamma-glutamyl phosphate reductase (419 aa).

The protein belongs to the gamma-glutamyl phosphate reductase family.

It is found in the cytoplasm. The catalysed reaction is L-glutamate 5-semialdehyde + phosphate + NADP(+) = L-glutamyl 5-phosphate + NADPH + H(+). It functions in the pathway amino-acid biosynthesis; L-proline biosynthesis; L-glutamate 5-semialdehyde from L-glutamate: step 2/2. Catalyzes the NADPH-dependent reduction of L-glutamate 5-phosphate into L-glutamate 5-semialdehyde and phosphate. The product spontaneously undergoes cyclization to form 1-pyrroline-5-carboxylate. The sequence is that of Gamma-glutamyl phosphate reductase from Mannheimia succiniciproducens (strain KCTC 0769BP / MBEL55E).